A 311-amino-acid chain; its full sequence is Protease HtpX homolog 1 (311 aa).

Helical transmembrane passes span 12–32 and 35–55; these read IIALFLTIVSEGIFSLVIINF and FPVIFSIIFLLILWLIQWLIS. A Zn(2+)-binding site is contributed by histidine 137. Residue glutamate 138 is part of the active site. Histidine 141 serves as a coordination point for Zn(2+). The next 2 membrane-spanning stretches (helical) occupy residues 159 to 179 and 184 to 204; these read ILGFISNILLTVGWATLIFAV and ILVGLTMLAIGGVLFVITFFL. Glutamate 216 provides a ligand contact to Zn(2+).

This sequence belongs to the peptidase M48B family. Requires Zn(2+) as cofactor.

It localises to the cell membrane. In Sulfurisphaera tokodaii (strain DSM 16993 / JCM 10545 / NBRC 100140 / 7) (Sulfolobus tokodaii), this protein is Protease HtpX homolog 1.